The following is a 615-amino-acid chain: 1-deoxy-D-xylulose-5-phosphate synthase (615 aa).

Residues His76 and Gly117–Ser119 contribute to the thiamine diphosphate site. Asp148 is a binding site for Mg(2+). Residues Gly149 to Ala150, Asn177, Tyr284, and Glu365 each bind thiamine diphosphate. A Mg(2+)-binding site is contributed by Asn177.

Belongs to the transketolase family. DXPS subfamily. As to quaternary structure, homodimer. The cofactor is Mg(2+). Thiamine diphosphate serves as cofactor.

The catalysed reaction is D-glyceraldehyde 3-phosphate + pyruvate + H(+) = 1-deoxy-D-xylulose 5-phosphate + CO2. It functions in the pathway metabolic intermediate biosynthesis; 1-deoxy-D-xylulose 5-phosphate biosynthesis; 1-deoxy-D-xylulose 5-phosphate from D-glyceraldehyde 3-phosphate and pyruvate: step 1/1. In terms of biological role, catalyzes the acyloin condensation reaction between C atoms 2 and 3 of pyruvate and glyceraldehyde 3-phosphate to yield 1-deoxy-D-xylulose-5-phosphate (DXP). This chain is 1-deoxy-D-xylulose-5-phosphate synthase, found in Francisella tularensis subsp. mediasiatica (strain FSC147).